The primary structure comprises 172 residues: Peptide methionine sulfoxide reductase MsrA 1 (172 aa).

The active site involves C14.

The protein belongs to the MsrA Met sulfoxide reductase family.

The enzyme catalyses L-methionyl-[protein] + [thioredoxin]-disulfide + H2O = L-methionyl-(S)-S-oxide-[protein] + [thioredoxin]-dithiol. It carries out the reaction [thioredoxin]-disulfide + L-methionine + H2O = L-methionine (S)-S-oxide + [thioredoxin]-dithiol. In terms of biological role, has an important function as a repair enzyme for proteins that have been inactivated by oxidation. Catalyzes the reversible oxidation-reduction of methionine sulfoxide in proteins to methionine. The protein is Peptide methionine sulfoxide reductase MsrA 1 (msrA1) of Mesorhizobium japonicum (strain LMG 29417 / CECT 9101 / MAFF 303099) (Mesorhizobium loti (strain MAFF 303099)).